Here is a 359-residue protein sequence, read N- to C-terminus: Insulin gene enhancer protein ISL-2 (359 aa).

2 LIM zinc-binding domains span residues 25-86 (AMCV…RLFG) and 87-149 (IKCA…LLER). The disordered stretch occupies residues 151 to 190 (AAGSPRSPGPLPGARGLHLPDAGSGRQPSLRTHVHKQAEK). A phosphoserine mark is found at S154 and S157. A DNA-binding region (homeobox) is located at residues 191–250 (TTRVRTVLNEKQLHTLRTCYAANPRPDALMKEQLVEMTGLSPRVIRVWFQNKRCKDKKKS). Residues 272–301 (GTPLVAGSPIRHENAVQGSAVEVQTYQPPW) form an LIM-binding domain (LID) region. At S279 the chain carries Phosphoserine. Positions 326-336 (ESGSLGNSSGS) are enriched in low complexity. Residues 326-359 (ESGSLGNSSGSDVTSLSSQLPDTPNSMVPSPVET) form a disordered region. Polar residues predominate over residues 337–359 (DVTSLSSQLPDTPNSMVPSPVET).

Interacts with LHX4.

It localises to the nucleus. Functionally, transcriptional factor that defines subclasses of motoneurons that segregate into columns in the spinal cord and select distinct axon pathways. The protein is Insulin gene enhancer protein ISL-2 (Isl2) of Mus musculus (Mouse).